A 236-amino-acid chain; its full sequence is Adenylate dimethylallyltransferase (236 aa).

The protein belongs to the isopentenyl transferase family.

The enzyme catalyses dimethylallyl diphosphate + AMP = N(6)-(dimethylallyl)adenosine 5'-phosphate + diphosphate. Transfers dimethylallyl groups to AMP as part of the biosynthesis of cytokinin phytohormones. The protein is Adenylate dimethylallyltransferase (ipt) of Allorhizobium ampelinum (strain ATCC BAA-846 / DSM 112012 / S4) (Agrobacterium vitis (strain S4)).